The primary structure comprises 553 residues: Arginine--tRNA ligase (553 aa).

The 'HIGH' region motif lies at 130 to 140; sequence ANPTGDLHIGH.

Belongs to the class-I aminoacyl-tRNA synthetase family. As to quaternary structure, monomer.

It is found in the cytoplasm. It catalyses the reaction tRNA(Arg) + L-arginine + ATP = L-arginyl-tRNA(Arg) + AMP + diphosphate. This Staphylococcus aureus (strain bovine RF122 / ET3-1) protein is Arginine--tRNA ligase.